The following is a 262-amino-acid chain: Acyl-[acyl-carrier-protein]--UDP-N-acetylglucosamine O-acyltransferase (262 aa).

This sequence belongs to the transferase hexapeptide repeat family. LpxA subfamily. Homotrimer.

Its subcellular location is the cytoplasm. It catalyses the reaction a (3R)-hydroxyacyl-[ACP] + UDP-N-acetyl-alpha-D-glucosamine = a UDP-3-O-[(3R)-3-hydroxyacyl]-N-acetyl-alpha-D-glucosamine + holo-[ACP]. It participates in glycolipid biosynthesis; lipid IV(A) biosynthesis; lipid IV(A) from (3R)-3-hydroxytetradecanoyl-[acyl-carrier-protein] and UDP-N-acetyl-alpha-D-glucosamine: step 1/6. Functionally, involved in the biosynthesis of lipid A, a phosphorylated glycolipid that anchors the lipopolysaccharide to the outer membrane of the cell. The polypeptide is Acyl-[acyl-carrier-protein]--UDP-N-acetylglucosamine O-acyltransferase (Burkholderia ambifaria (strain MC40-6)).